A 119-amino-acid chain; its full sequence is Large ribosomal subunit protein bL20 (119 aa).

Belongs to the bacterial ribosomal protein bL20 family.

Its function is as follows. Binds directly to 23S ribosomal RNA and is necessary for the in vitro assembly process of the 50S ribosomal subunit. It is not involved in the protein synthesizing functions of that subunit. The chain is Large ribosomal subunit protein bL20 from Xanthomonas oryzae pv. oryzae (strain PXO99A).